We begin with the raw amino-acid sequence, 183 residues long: Ferredoxin-2, mitochondrial (183 aa).

Residues 1–52 (MAASMARGGVSARVLLQAARGTWWNRPGGTSGSGEGVALGTTRKFQATGSRP) constitute a mitochondrion transit peptide. Residues 45–65 (FQATGSRPAGEEDAGGPERPG) are disordered. A 2Fe-2S ferredoxin-type domain is found at 68-170 (VNVVFVDRSG…GAEFTLPKIT (103 aa)). 4 residues coordinate [2Fe-2S] cluster: Cys-105, Cys-111, Cys-114, and Cys-151.

The protein belongs to the adrenodoxin/putidaredoxin family. In terms of assembly, component of the mitochondrial core iron-sulfur cluster (ISC) complex composed of NFS1, LYRM4, NDUFAB1, ISCU, FXN, and FDX2; this complex is a heterohexamer containing two copies of each monomer. Form a heterodimer complex with NFS1. Interacts (in both their reduced and oxidized states) with the cysteine desulfurase complex; this interaction stimulates cysteine desulfurase activity, and serves as a reductant for Fe-S cluster assembly. It depends on [2Fe-2S] cluster as a cofactor. Widely expressed, with highest levels in testis, kidney and brain (at protein level). Expressed in muscle (at protein level). Expressed in fibroblasts (at protein level).

The protein localises to the mitochondrion. It localises to the mitochondrion matrix. Electron donor, of the core iron-sulfur cluster (ISC) assembly complex, that acts to reduce the persulfide into sulfide during [2Fe-2S] clusters assembly on the scaffolding protein ISCU. The core iron-sulfur cluster (ISC) assembly complex is involved in the de novo synthesis of a [2Fe-2S] cluster, the first step of the mitochondrial iron-sulfur protein biogenesis. This process is initiated by the cysteine desulfurase complex (NFS1:LYRM4:NDUFAB1) that produces persulfide which is delivered on the scaffold protein ISCU in a FXN-dependent manner. Then this complex is stabilized by FDX2 which provides reducing equivalents to accomplish the [2Fe-2S] cluster assembly. Finally, the [2Fe-2S] cluster is transferred from ISCU to chaperone proteins, including HSCB, HSPA9 and GLRX5. Essential for coenzyme Q biosynthesis: together with FDXR, transfers the electrons required for the hydroxylation reaction performed by COQ6. This is Ferredoxin-2, mitochondrial from Homo sapiens (Human).